Here is a 131-residue protein sequence, read N- to C-terminus: Ribonuclease VapC4 (131 aa).

The PINc domain occupies 4–106; it reads IVPDTNFLIY…IVATNDKELK (103 aa). Positions 7 and 102 each coordinate Mg(2+).

This sequence belongs to the PINc/VapC protein family. Mg(2+) is required as a cofactor.

In terms of biological role, toxic component of a type II toxin-antitoxin (TA) system. An RNase. Its cognate antitoxin is VapB4. The chain is Ribonuclease VapC4 from Methanocaldococcus jannaschii (strain ATCC 43067 / DSM 2661 / JAL-1 / JCM 10045 / NBRC 100440) (Methanococcus jannaschii).